Consider the following 501-residue polypeptide: Probable cytosol aminopeptidase (501 aa).

K270 and D275 together coordinate Mn(2+). Residue K282 is part of the active site. D293, D352, and E354 together coordinate Mn(2+). R356 is an active-site residue.

Belongs to the peptidase M17 family. It depends on Mn(2+) as a cofactor.

The protein resides in the cytoplasm. The enzyme catalyses Release of an N-terminal amino acid, Xaa-|-Yaa-, in which Xaa is preferably Leu, but may be other amino acids including Pro although not Arg or Lys, and Yaa may be Pro. Amino acid amides and methyl esters are also readily hydrolyzed, but rates on arylamides are exceedingly low.. It catalyses the reaction Release of an N-terminal amino acid, preferentially leucine, but not glutamic or aspartic acids.. In terms of biological role, presumably involved in the processing and regular turnover of intracellular proteins. Catalyzes the removal of unsubstituted N-terminal amino acids from various peptides. In Wigglesworthia glossinidia brevipalpis, this protein is Probable cytosol aminopeptidase.